The primary structure comprises 278 residues: Rhamnulose-1-phosphate aldolase (278 aa).

Glu116 is a catalytic residue. His139, His141, and His210 together coordinate Zn(2+).

Belongs to the aldolase class II family. RhaD subfamily. Zn(2+) serves as cofactor.

It localises to the cytoplasm. It carries out the reaction L-rhamnulose 1-phosphate = (S)-lactaldehyde + dihydroxyacetone phosphate. It functions in the pathway carbohydrate degradation; L-rhamnose degradation; glycerone phosphate from L-rhamnose: step 3/3. Its function is as follows. Catalyzes the reversible cleavage of L-rhamnulose-1-phosphate to dihydroxyacetone phosphate (DHAP) and L-lactaldehyde. This is Rhamnulose-1-phosphate aldolase from Listeria welshimeri serovar 6b (strain ATCC 35897 / DSM 20650 / CCUG 15529 / CIP 8149 / NCTC 11857 / SLCC 5334 / V8).